The primary structure comprises 614 residues: Sodium- and chloride-dependent betaine transporter (614 aa).

At 1–44 (MDGKVAVQECGPPAVSWVPEEGEKLDQEDEDQVKDRGQWTNKME) the chain is on the cytoplasmic side. A run of 3 helical transmembrane segments spans residues 45–65 (FVLSVAGEIIGLGNVWRFPYL), 73–92 (AFFIPYFIFFFVCGIPVFFL), and 117–137 (GIGLASVVIESYLNVYYIIIL). At 138-210 (AWALFYLFSS…SGIHDLGSLR (73 aa)) the chain is on the extracellular side. An intrachain disulfide couples Cys-157 to Cys-166. Asn-171 and Asn-183 each carry an N-linked (GlcNAc...) asparagine glycan. The next 9 membrane-spanning stretches (helical) occupy residues 211-229 (WELALCLLLAWVICYFCIW), 238-255 (VVYFTATFPYLMLVILLI), 291-308 (IFFSFAICQGCLTALGSY), 320-341 (IALCFLNSATSFVAGFVVFSIL), 374-393 (MPLSQLWSCLFFIMLIFLGL), 423-441 (LLILTIAVMCYLIGLFLVT), 458-478 (GICLLFLSLFEVVCISWVYGA), 499-518 (ISWLFLTPGLCLATFLFSLS), and 538-556 (IGWFLALSSMVCVPLFVVI). The Cytoplasmic segment spans residues 557–614 (TLLKTRGPFRKRLRQLITPDSSLPQPKQHPCLDGSAGRNFGPSPTREGLIAGEKETHL). The segment at 576-614 (DSSLPQPKQHPCLDGSAGRNFGPSPTREGLIAGEKETHL) is disordered.

The protein belongs to the sodium:neurotransmitter symporter (SNF) (TC 2.A.22) family. SLC6A12 subfamily. As to quaternary structure, interacts with LIN7C. Expressed in kidney, liver, heart, skeletal muscle, placenta, and a widespread distribution in the brain.

The protein resides in the basolateral cell membrane. It is found in the cell membrane. The enzyme catalyses 4-aminobutanoate(out) + chloride(out) + 3 Na(+)(out) = 4-aminobutanoate(in) + chloride(in) + 3 Na(+)(in). The catalysed reaction is glycine betaine(out) + 2 chloride(out) + 3 Na(+)(out) = glycine betaine(in) + 2 chloride(in) + 3 Na(+)(in). Functionally, transporter that mediates cellular uptake of betaine and GABA in a sodium- and chloride-dependent process. May have a role in regulation of GABAergic transmission in the brain through the reuptake of GABA into presynaptic terminals, as well as in osmotic regulation. Probably also involved in renal and hepatic osmotic regulation. In Homo sapiens (Human), this protein is Sodium- and chloride-dependent betaine transporter.